The following is a 126-amino-acid chain: Fluoride-specific ion channel FluC (126 aa).

4 helical membrane-spanning segments follow: residues 6 to 26, 32 to 52, 68 to 90, and 102 to 122; these read VLLVGAGGFAGSVARYLVALA, TGFPFATFAVNLLGSFLIGFI, LLLTTGFCGGFTTFSTAMYETGG, and LYVAGSLAGGLACLFSGTLLA. Na(+) contacts are provided by G76 and T79.

Belongs to the fluoride channel Fluc/FEX (TC 1.A.43) family.

It localises to the cell inner membrane. It catalyses the reaction fluoride(in) = fluoride(out). Na(+) is not transported, but it plays an essential structural role and its presence is essential for fluoride channel function. Its function is as follows. Fluoride-specific ion channel. Important for reducing fluoride concentration in the cell, thus reducing its toxicity. The chain is Fluoride-specific ion channel FluC from Chlorobaculum tepidum (strain ATCC 49652 / DSM 12025 / NBRC 103806 / TLS) (Chlorobium tepidum).